Here is a 1092-residue protein sequence, read N- to C-terminus: MCRDEPDTMILTQIEAKEACDWLRVTGFPQYAQLYEDLLFPVDIALVKREHDFLDRDAIEALCRRLNTLNKCAVMKLEISPHRKRSEDSDEDEPCAISGKWTFQRDSKRWSRLEEFDVFFPKQDPIPGSPDNSRLQSATSHESMLTDLSEHQEVASVRSLSSTSSSVPTHAAHSGDATTPRTNSVISVCSSGHFVGNDDSFSSLPSPKELSSFSFSMKGHHEKNTKSKTRSLLKRMESLKLKGSHHSKHKAPSKLGLIISAPILQEGMDEAKLKQLNCVEISALNGNHINVPMVRKRSVSNSTQTSSSSSQSETSSAVSTPSPVTRTRSLSTCNKRVGMYLEGFDPFSQSTLNNVTEQNYKNRESYPEDTVFYIPEDHKPGTFPKALSHGSFCPSGNSSVNWRTGSFHGPGHLSLRRENSHDSPKELKRRNSSSSLSSRLSIYDNVPGSILYSSSGELADLENEDIFPELDDILYHVKGMQRIVNQWSEKFSDEGDSDSALDSVSPCPSSPKQIHLDVDHDRRTPSDLDSTGNSLNEPEEPTDIPERRDSGVGASLTRCNRHRLRWHSFQSSHRPSLNSVSLQINCQSVAQMNLLQKYSLLKLTALLEKYTPSNKHGFSWAVPKFMKRIKVPDYKDRSVFGVPLTVNVQRSGQPLPQSIQQAMRYLRNHCLDQVGLFRKSGVKSRIQALRQMNESAEDNVNYEGQSAYDVADMLKQYFRDLPEPLMTNKLSETFLQIYQYVPKDQRLQAIKAAIMLLPDENREVLQTLLYFLSDVTAAVKENQMTPTNLAVCLAPSLFHLNTLKRENSSPRVMQRKQSLGKPDQKDLNENLAATQGLAHMIAECKKLFQVPEEMSRCRNSYTEQELKPLTLEALGHLNSDQPADYRHFLQDCVDGLFKEVKEKFKGWVSYPTSEQADLSYKKVSEGPPLRLWRSTIEVPAAPEEILKRLLKEQHLWDVDLLDSKVIEILDSQTEIYQYVQNSMAPHPARDYVVLRTWRTNLPRGACALLLTSVDHDRAPVAGVRVNVLLSRYLIEPCGSGKSKLTYMCRADLRGHMPEWYSKSFGHLCAAEVVKIRDSFSNQNTESKDTRSR.

In terms of domain architecture, SAM spans 11–78 (LTQIEAKEAC…LNKCAVMKLE (68 aa)). Phosphoserine is present on residues Ser-86, Ser-89, and Ser-129. Disordered stretches follow at residues 121–179 (PKQD…DATT), 297–330 (RSVS…TRSL), 409–434 (GPGH…NSSS), and 492–553 (SDEG…SGVG). Positions 130–143 (PDNSRLQSATSHES) are enriched in polar residues. 2 stretches are compositionally biased toward low complexity: residues 154–174 (VASV…AAHS) and 299–325 (VSNS…SPVT). The interval 275–448 (QLNCVEISAL…RLSIYDNVPG (174 aa)) is focal adhesion-targeting (FAT). A Phosphoserine modification is found at Ser-322. Residues 415–426 (LRRENSHDSPKE) show a composition bias toward basic and acidic residues. The span at 500-512 (ALDSVSPCPSSPK) shows a compositional bias: polar residues. The span at 514–526 (IHLDVDHDRRTPS) shows a compositional bias: basic and acidic residues. The segment covering 527-536 (DLDSTGNSLN) has biased composition (polar residues). The polybasic cluster (PBR) stretch occupies residues 615–637 (KHGFSWAVPKFMKRIKVPDYKDR). The region spanning 642 to 848 (VPLTVNVQRS…HMIAECKKLF (207 aa)) is the Rho-GAP domain. Residues 878–1085 (NSDQPADYRH…RDSFSNQNTE (208 aa)) enclose the START domain.

As to quaternary structure, interacts with EF1A1, facilitates EF1A1 distribution to the membrane periphery and ruffles upon growth factor stimulation and suppresses cell migration. Interacts with tensin TNS1 (via N-terminus); the interaction is decreased by phosphorylation of TNS1. Interacts with TNS3 and PTEN; in resting cells, interacts with TNS3 (via C2 tensin-type domain) but, following growth factor stimulation, TNS3 and PTEN are phosphorylated which leads to weakened interaction with TNS3 and enhanced interaction with PTEN. Interacts (via C-terminus) with tensin TNS4 (via SH2 domain); the interaction is independent of tyrosine phosphorylation of DLC1. As to expression, widely expressed with the highest levels in heart, liver and lung.

The protein resides in the cytoplasm. It localises to the cell junction. Its subcellular location is the focal adhesion. The protein localises to the membrane. Functionally, functions as a GTPase-activating protein for the small GTPases RHOA, RHOB, RHOC and CDC42, terminating their downstream signaling. This induces morphological changes and detachment through cytoskeletal reorganization, playing a critical role in biological processes such as cell migration and proliferation. Also functions in vivo as an activator of the phospholipase PLCD1. Active DLC1 increases cell migration velocity but reduces directionality. Required for growth factor-induced epithelial cell migration; in resting cells, interacts with TNS3 while PTEN interacts with the p85 regulatory subunit of the PI3K kinase complex but growth factor stimulation induces phosphorylation of TNS3 and PTEN, causing them to change their binding preference so that PTEN interacts with DLC1 and TNS3 interacts with p85. The PTEN-DLC1 complex translocates to the posterior of migrating cells to activate RHOA while the TNS3-p85 complex translocates to the leading edge of migrating cells to promote RAC1 activation. The protein is Rho GTPase-activating protein 7 (Dlc1) of Mus musculus (Mouse).